We begin with the raw amino-acid sequence, 420 residues long: Phosphoribosylamine--glycine ligase (420 aa).

The region spanning 108–314 (KEIMVKYGVP…FAQNITDILD (207 aa)) is the ATP-grasp domain. 134-195 (IEKHGAPIVV…EEFLEGEEFS (62 aa)) contacts ATP. Mg(2+)-binding residues include Glu-284 and Asn-286.

The protein belongs to the GARS family. It depends on Mg(2+) as a cofactor. Requires Mn(2+) as cofactor.

It carries out the reaction 5-phospho-beta-D-ribosylamine + glycine + ATP = N(1)-(5-phospho-beta-D-ribosyl)glycinamide + ADP + phosphate + H(+). It functions in the pathway purine metabolism; IMP biosynthesis via de novo pathway; N(1)-(5-phospho-D-ribosyl)glycinamide from 5-phospho-alpha-D-ribose 1-diphosphate: step 2/2. The protein is Phosphoribosylamine--glycine ligase of Streptococcus pneumoniae serotype 4 (strain ATCC BAA-334 / TIGR4).